Consider the following 207-residue polypeptide: Superoxide dismutase [Mn] (207 aa).

The Mn(2+) site is built by His-28, His-76, Asp-160, and His-164.

This sequence belongs to the iron/manganese superoxide dismutase family. Mn(2+) is required as a cofactor.

The catalysed reaction is 2 superoxide + 2 H(+) = H2O2 + O2. Destroys superoxide anion radicals which are normally produced within the cells and which are toxic to biological systems. This chain is Superoxide dismutase [Mn] (sodA), found in Mycobacterium leprae (strain TN).